Reading from the N-terminus, the 309-residue chain is MITFLPIIFSILIVVTFVIGNFANGFIALANSIEWFKRQKISFADQILTALAVSRVGLLWVLLLNWYATELNPAFYSIEVRITAYNLWAVINHFSNWLATSLSIFYLLKIANFSNLIFLRLKRRVKSVVLVILLGPLLFLVCHLFVINMNQIIWTKEYEGNMTWKIKLRSAMYLSNITVTILANLVPFTLTLISFLLLICSLCKHLKKMQLHGKGSQDPSMKVHIKALQTVTSFLLLCAIYFLSIIMSVWSFESLENKPVFMFCEAITFSYPSTHPFILIWGNKKLKQTFLSVLWHVRYWVKGEEPSSP.

Residue methionine 1 is a topological domain, extracellular. Residues isoleucine 2–phenylalanine 22 traverse the membrane as a helical segment. Residues alanine 23–glutamine 46 are Cytoplasmic-facing. The helical transmembrane segment at isoleucine 47–tyrosine 67 threads the bilayer. Topologically, residues alanine 68–asparagine 86 are extracellular. Residues leucine 87–leucine 107 traverse the membrane as a helical segment. Residues leucine 108 to lysine 126 are Cytoplasmic-facing. The chain crosses the membrane as a helical span at residues serine 127–isoleucine 147. Topologically, residues asparagine 148 to threonine 178 are extracellular. 2 N-linked (GlcNAc...) asparagine glycosylation sites follow: asparagine 161 and asparagine 176. Residues valine 179 to isoleucine 199 traverse the membrane as a helical segment. At cysteine 200–glutamine 229 the chain is on the cytoplasmic side. The helical transmembrane segment at threonine 230–tryptophan 250 threads the bilayer. Topologically, residues serine 251–proline 259 are extracellular. Residues valine 260–isoleucine 280 traverse the membrane as a helical segment. Over tryptophan 281–proline 309 the chain is Cytoplasmic.

It belongs to the G-protein coupled receptor T2R family.

It localises to the membrane. The protein resides in the cell projection. Its subcellular location is the cilium membrane. In terms of biological role, receptor that may play a role in the perception of bitterness and is gustducin-linked. May play a role in sensing the chemical composition of the gastrointestinal content. The activity of this receptor may stimulate alpha gustducin, mediate PLC-beta-2 activation and lead to the gating of TRPM5. In airway epithelial cells, binding of bitter compounds increases the intracellular calcium ion concentration and stimulates ciliary beat frequency. The polypeptide is Taste receptor type 2 member 46 (TAS2R46) (Pan paniscus (Pygmy chimpanzee)).